A 403-amino-acid chain; its full sequence is Imidazolonepropionase (403 aa).

Fe(3+) contacts are provided by H69 and H71. Zn(2+)-binding residues include H69 and H71. Positions 78, 141, and 174 each coordinate 4-imidazolone-5-propanoate. N-formimidoyl-L-glutamate is bound at residue Y141. H239 is a Fe(3+) binding site. H239 is a binding site for Zn(2+). Q242 provides a ligand contact to 4-imidazolone-5-propanoate. D314 is a Fe(3+) binding site. D314 serves as a coordination point for Zn(2+). The N-formimidoyl-L-glutamate site is built by N316 and G318. Residue S319 participates in 4-imidazolone-5-propanoate binding.

It belongs to the metallo-dependent hydrolases superfamily. HutI family. Requires Zn(2+) as cofactor. Fe(3+) serves as cofactor.

The protein resides in the cytoplasm. The enzyme catalyses 4-imidazolone-5-propanoate + H2O = N-formimidoyl-L-glutamate. It participates in amino-acid degradation; L-histidine degradation into L-glutamate; N-formimidoyl-L-glutamate from L-histidine: step 3/3. In terms of biological role, catalyzes the hydrolytic cleavage of the carbon-nitrogen bond in imidazolone-5-propanoate to yield N-formimidoyl-L-glutamate. It is the third step in the universal histidine degradation pathway. This Legionella pneumophila (strain Corby) protein is Imidazolonepropionase.